The sequence spans 274 residues: 4-diphosphocytidyl-2-C-methyl-D-erythritol kinase (274 aa).

Lys-7 is a catalytic residue. 90 to 100 serves as a coordination point for ATP; that stretch reads PMGGGLGGGSS. The active site involves Asp-132.

It belongs to the GHMP kinase family. IspE subfamily.

The enzyme catalyses 4-CDP-2-C-methyl-D-erythritol + ATP = 4-CDP-2-C-methyl-D-erythritol 2-phosphate + ADP + H(+). The protein operates within isoprenoid biosynthesis; isopentenyl diphosphate biosynthesis via DXP pathway; isopentenyl diphosphate from 1-deoxy-D-xylulose 5-phosphate: step 3/6. Catalyzes the phosphorylation of the position 2 hydroxy group of 4-diphosphocytidyl-2C-methyl-D-erythritol. This Dechloromonas aromatica (strain RCB) protein is 4-diphosphocytidyl-2-C-methyl-D-erythritol kinase.